We begin with the raw amino-acid sequence, 434 residues long: Meiosis-specific kinetochore protein (434 aa).

2 disordered regions span residues 1-102 and 249-289; these read MDKI…PCET and VFAE…PDNK. The segment covering 46–62 has biased composition (basic and acidic residues); that stretch reads KGKEQGLRKITEKKELS. Residues 64 to 76 show a composition bias toward polar residues; sequence LTGSSSQRPSLLS. Positions 334–336 match the POLO box domain (PBD)-binding motif; the sequence is STP. The segment at 391 to 394 is required for localization to kinetochores; the sequence is EICC. Residues 404 to 424 are disordered; sequence QMRRKDPAVKNRCSPPKDVPL.

Interacts with CENPC. Interacts with PLK1; required for recruitment of PLK1 at kinetochores. Germ cell-specific. Expressed in both testis and ovary. Not expressed in other tissues.

The protein localises to the chromosome. The protein resides in the centromere. It is found in the kinetochore. Functionally, key regulator of kinetochore function during meiosis I: required both for mono-orientation of kinetochores on sister chromosomes and protection of centromeric cohesin from separase-mediated cleavage. Acts by facilitating kinetochore mono-orientation during meiosis I, when kinetochores on sister chromosomes face the same direction and are thus captured and pulled by spindle fibers from the same pole. Also required to prevent cleavage of cohesin at centromeres during meiosis I, possibly by acting as a regulator of the shugoshin-dependent protection pathway. Acts in collaboration with PLK1: required for PLK1 enrichment to kinetochores. Not required during meiosis II or mitosis. This chain is Meiosis-specific kinetochore protein, found in Mus musculus (Mouse).